The chain runs to 525 residues: Signal recognition particle protein (525 aa).

GTP-binding positions include 107–114, 196–200, and 254–257; these read GLQGSGKT, DTAGR, and TKLD. Positions 437 to 525 are disordered; that stretch reads GMGIPGIGRK…LSKLKFPGKK (89 aa). Over residues 447–467 the composition is skewed to basic residues; that stretch reads SATRKSKGAKGKSGKKSKKGT. Positions 480-497 are enriched in low complexity; that stretch reads GVPGMPGLAGLPGGLPDL.

Belongs to the GTP-binding SRP family. SRP54 subfamily. In terms of assembly, part of the signal recognition particle protein translocation system, which is composed of SRP and FtsY.

The protein resides in the cytoplasm. The enzyme catalyses GTP + H2O = GDP + phosphate + H(+). Its function is as follows. Involved in targeting and insertion of nascent membrane proteins into the cytoplasmic membrane. Binds to the hydrophobic signal sequence of the ribosome-nascent chain (RNC) as it emerges from the ribosomes. The SRP-RNC complex is then targeted to the cytoplasmic membrane where it interacts with the SRP receptor FtsY. The chain is Signal recognition particle protein from Mycobacterium bovis (strain ATCC BAA-935 / AF2122/97).